A 291-amino-acid polypeptide reads, in one-letter code: MAGSLSEIKAKINSTEKTSKITSAMRMVSSAKLVKSEQSARDFQIYASKIRQITTDLLKAELTSGSTNPMLVSRPVKKTGYIVITSDKGLVGGYNSKILKSVMEMIEEYHADGSYSIISIGSVGSDFFKARGMNVSFELRGLADQPSFEEVGKIISQSVAMYQNEIFDELYVCYNHHVNSLTSQVRVQQMLPISDLVAEEANDEGVVGFELEPDRDTILNQLLPQFTESLIYGAIIDAKTAEHAAGMTAMQTATDNAKNVINDLTIQYNRARQAAITQEITEIVAGANALE.

The protein belongs to the ATPase gamma chain family. In terms of assembly, F-type ATPases have 2 components, CF(1) - the catalytic core - and CF(0) - the membrane proton channel. CF(1) has five subunits: alpha(3), beta(3), gamma(1), delta(1), epsilon(1). CF(0) has three main subunits: a, b and c.

It localises to the cell membrane. Produces ATP from ADP in the presence of a proton gradient across the membrane. The gamma chain is believed to be important in regulating ATPase activity and the flow of protons through the CF(0) complex. This is ATP synthase gamma chain from Streptococcus uberis (strain ATCC BAA-854 / 0140J).